We begin with the raw amino-acid sequence, 358 residues long: Phosphoserine aminotransferase (358 aa).

Residue Arg43 participates in L-glutamate binding. Residues Trp103, Thr153, Asp172, and Gln195 each contribute to the pyridoxal 5'-phosphate site. Position 196 is an N6-(pyridoxal phosphate)lysine (Lys196). 236-237 (NT) contributes to the pyridoxal 5'-phosphate binding site.

Belongs to the class-V pyridoxal-phosphate-dependent aminotransferase family. SerC subfamily. Homodimer. Pyridoxal 5'-phosphate is required as a cofactor.

It localises to the cytoplasm. The catalysed reaction is O-phospho-L-serine + 2-oxoglutarate = 3-phosphooxypyruvate + L-glutamate. It catalyses the reaction 4-(phosphooxy)-L-threonine + 2-oxoglutarate = (R)-3-hydroxy-2-oxo-4-phosphooxybutanoate + L-glutamate. The protein operates within amino-acid biosynthesis; L-serine biosynthesis; L-serine from 3-phospho-D-glycerate: step 2/3. Its pathway is cofactor biosynthesis; pyridoxine 5'-phosphate biosynthesis; pyridoxine 5'-phosphate from D-erythrose 4-phosphate: step 3/5. In terms of biological role, catalyzes the reversible conversion of 3-phosphohydroxypyruvate to phosphoserine and of 3-hydroxy-2-oxo-4-phosphonooxybutanoate to phosphohydroxythreonine. The polypeptide is Phosphoserine aminotransferase (Dichelobacter nodosus (strain VCS1703A)).